Consider the following 654-residue polypeptide: MATPLIELCDIRKAYGGVDTPRVEVLRGISLRVHAGEFVAIVGASGSGKSTLMNILGCLDRPSAGSYRFAGKDVAELDSDELAWLRREAFGFVFQGYHLIPSGSAQENVEMPAIYAGTPAAERQARASALLGRLGLASRTANRPHQLSGGQQQRVSIARALMNGGHIILADEPTGALDSHSGAEVMALLDELASQGHVIILITHDREVAARAHRVIEIRDGLVISDSAADQPPAHAHKGIQAEELRQRLDRGATQHGAWKGELLESLQAAWRVMWINRFRTALTLLGIIIGVASVVVMLAVGEGSKRQVMAQMAAFGSNILYLNGSPPTLREPAGRITLDDVAAIGELPQVKHIMPVLGEKMMVRHGNNSQQFYVGGNNTFFPEIFNWPAVEGSFFTETDEASSAAVAVIGQKVREKMLAPGSNPIGQYLLIGNVPFQVVGILAGKGASSGDQDSDGRIVVPFSAAAIRLFGHRDPDYIAIAARDSGQVKDTEAAIDRLLRQRHQGKHDFELTNDAALIQAEARTQNSLSLMLGAIAAISLLVGGIGVMNIMLMTVRERTREIGIRMATGARQRDILRQFLSEAIMLSMVGGLTGIALALVVGASLTLADIAVAFALPAIVGAFACAVITGVVFGFMPARKAARLDPVKALTSE.

In terms of domain architecture, ABC transporter spans 6–245; sequence IELCDIRKAY…AHKGIQAEEL (240 aa). 43–50 contacts ATP; it reads GASGSGKS. A run of 4 helical transmembrane segments spans residues 282–302, 529–549, 584–604, and 614–634; these read ALTLLGIIIGVASVVVMLAVG, LSLMLGAIAAISLLVGGIGVM, AIMLSMVGGLTGIALALVVGA, and AFALPAIVGAFACAVITGVVF.

It belongs to the ABC transporter superfamily. Macrolide exporter (TC 3.A.1.122) family. As to quaternary structure, part of the tripartite efflux system PvdRT-OpmQ, which is composed of an inner membrane component with both ATPase and permease domains, PvdT, a periplasmic membrane fusion protein, PvdR, and an outer membrane component, OpmQ.

The protein resides in the cell inner membrane. Has a basal ATPase activity that is stimulated by PvdR. In vitro, interaction with PVD influences the affinity of PvdT to PvdR. In terms of biological role, part of the tripartite efflux system PvdRT-OpmQ required for the secretion into the extracellular milieu of the siderophore pyoverdine (PVD), which is involved in iron acquisition. This subunit binds PVD and drives its secretion by hydrolyzing ATP. The system is responsible for export of newly synthesized PVD after the final steps of biosynthesis have taken place in the periplasm. It is also responsible for recycling of PVD after internalization of ferri-PVD into the periplasm by the outer-membrane receptor FpvA and release of iron from PVD, thus making PVD available for new cycles of iron uptake. Contributes to resistance against ampicillin. In Pseudomonas putida (strain ATCC 47054 / DSM 6125 / CFBP 8728 / NCIMB 11950 / KT2440), this protein is Pyoverdine export ATP-binding/permease protein PvdT.